Here is a 616-residue protein sequence, read N- to C-terminus: Chaperone protein HscA homolog (616 aa).

Belongs to the heat shock protein 70 family.

Chaperone involved in the maturation of iron-sulfur cluster-containing proteins. Has a low intrinsic ATPase activity which is markedly stimulated by HscB. In Aliivibrio fischeri (strain MJ11) (Vibrio fischeri), this protein is Chaperone protein HscA homolog.